The sequence spans 23 residues: Elongation factor Tu (23 aa).

This sequence belongs to the GTP-binding elongation factor family. EF-Tu/EF-1A subfamily. As to quaternary structure, monomer. The N-terminus is blocked. In terms of processing, the C-terminus may be subjected to proteolysis.

It is found in the cytoplasm. This protein promotes the GTP-dependent binding of aminoacyl-tRNA to the A-site of ribosomes during protein biosynthesis. This chain is Elongation factor Tu (tuf), found in Delftia acidovorans (Pseudomonas acidovorans).